The primary structure comprises 159 residues: Phosphopantetheine adenylyltransferase (159 aa).

H16 lines the ATP pocket. 3 residues coordinate substrate: K40, M72, and R86. Residues 87 to 89, E97, and 122 to 128 each bind ATP; these read GLR and YQYLSAS.

Belongs to the bacterial CoaD family. Homohexamer. Mg(2+) serves as cofactor.

It localises to the cytoplasm. The enzyme catalyses (R)-4'-phosphopantetheine + ATP + H(+) = 3'-dephospho-CoA + diphosphate. It functions in the pathway cofactor biosynthesis; coenzyme A biosynthesis; CoA from (R)-pantothenate: step 4/5. Functionally, reversibly transfers an adenylyl group from ATP to 4'-phosphopantetheine, yielding dephospho-CoA (dPCoA) and pyrophosphate. The chain is Phosphopantetheine adenylyltransferase from Dehalococcoides mccartyi (strain ATCC BAA-2100 / JCM 16839 / KCTC 5957 / BAV1).